Reading from the N-terminus, the 306-residue chain is MNQIWSTGPPNFYFNSEWKENKRNDRTIEDSLRELDGLIHSLERTHIEVQTNPKLKNDVTALNDINKKENKEEITHENYTHQINSIPLTSSNLNRHFSFSRDYNQSDNSNNNYYREYLSKPRYLQQSTKEQTFNEINKRKSAAIIPPWLNIPENSRFFVIKSSSLKHVKRSFYNGIWSSTHFGNKRLSEAYKKLNSGAKVFLFFSINTSGRFCGVAEMVSDLKMDLDTSIWEDEQKYGKAFKVRWVIVRDINNRSLKRFLIPSNEMKPITHSRDTQEIPYSIGISIINLFKTQDSDIFSFLDETYE.

Residues 155–290 (SRFFVIKSSS…SIGISIINLF (136 aa)) form the YTH domain. RNA is bound by residues 161 to 163 (KSS), Asn-207, and Trp-231.

Functionally, RNA-binding protein that acts as a post-transcriptional regulator of phosphate metabolism by binding to the 3'-UTR region of PHO4 mRNA, decreasing its stability. Acts by recognizing and binding N6-methyladenosine (m6A)-containing RNAs, a modification present at internal sites of mRNAs and some non-coding RNAs. The protein is Methylated RNA-binding protein 1 of Saccharomyces cerevisiae (strain ATCC 204508 / S288c) (Baker's yeast).